An 86-amino-acid polypeptide reads, in one-letter code: Small ribosomal subunit protein bS20 (86 aa).

This sequence belongs to the bacterial ribosomal protein bS20 family.

Its function is as follows. Binds directly to 16S ribosomal RNA. The sequence is that of Small ribosomal subunit protein bS20 from Kineococcus radiotolerans (strain ATCC BAA-149 / DSM 14245 / SRS30216).